The following is a 221-amino-acid chain: Protein N-terminal glutamine amidohydrolase (221 aa).

An N-acetylserine modification is found at Ser-2. Residues Cys-23, His-79, and Asp-97 contribute to the active site.

The protein belongs to the NTAQ1 family. In terms of assembly, monomer.

The catalysed reaction is N-terminal L-glutaminyl-[protein] + H2O = N-terminal L-glutamyl-[protein] + NH4(+). Mediates the side-chain deamidation of N-terminal glutamine residues to glutamate, an important step in N-end rule pathway of protein degradation. Conversion of the resulting N-terminal glutamine to glutamate renders the protein susceptible to arginylation, polyubiquitination and degradation as specified by the N-end rule. Does not act on substrates with internal or C-terminal glutamine and does not act on non-glutamine residues in any position. Involved in immune response. Controls the expression of specific defense-response genes, activates the synthesis pathway for the phytoalexin camalexin, and influences basal resistance to the hemibiotroph pathogen Pseudomonas syringae pv tomato (Pst). In Arabidopsis thaliana (Mouse-ear cress), this protein is Protein N-terminal glutamine amidohydrolase.